The following is a 383-amino-acid chain: Mannan endo-1,4-beta-mannosidase (383 aa).

Positions 1-35 (MRNARSTLITTAGMAFAVLGLLFALAGPSAGRAEA) are cleaved as a signal peptide. The CBM10 domain maps to 339–377 (GGSTGGTAPNGYPYCVNGGASDPDGDGWGWENSRSCVVR).

The protein belongs to the glycosyl hydrolase 5 (cellulase A) family. In terms of assembly, monomer.

The enzyme catalyses Random hydrolysis of (1-&gt;4)-beta-D-mannosidic linkages in mannans, galactomannans and glucomannans.. This is Mannan endo-1,4-beta-mannosidase (manA) from Streptomyces lividans.